Reading from the N-terminus, the 562-residue chain is Dihydroxy-acid dehydratase (562 aa).

Residue aspartate 80 participates in Mg(2+) binding. Cysteine 121 contacts [2Fe-2S] cluster. Mg(2+) is bound by residues aspartate 122 and lysine 123. N6-carboxylysine is present on lysine 123. Position 194 (cysteine 194) interacts with [2Fe-2S] cluster. Glutamate 446 is a Mg(2+) binding site. Serine 472 serves as the catalytic Proton acceptor.

The protein belongs to the IlvD/Edd family. In terms of assembly, homodimer. [2Fe-2S] cluster is required as a cofactor. Requires Mg(2+) as cofactor.

The catalysed reaction is (2R)-2,3-dihydroxy-3-methylbutanoate = 3-methyl-2-oxobutanoate + H2O. It catalyses the reaction (2R,3R)-2,3-dihydroxy-3-methylpentanoate = (S)-3-methyl-2-oxopentanoate + H2O. It functions in the pathway amino-acid biosynthesis; L-isoleucine biosynthesis; L-isoleucine from 2-oxobutanoate: step 3/4. Its pathway is amino-acid biosynthesis; L-valine biosynthesis; L-valine from pyruvate: step 3/4. In terms of biological role, functions in the biosynthesis of branched-chain amino acids. Catalyzes the dehydration of (2R,3R)-2,3-dihydroxy-3-methylpentanoate (2,3-dihydroxy-3-methylvalerate) into 2-oxo-3-methylpentanoate (2-oxo-3-methylvalerate) and of (2R)-2,3-dihydroxy-3-methylbutanoate (2,3-dihydroxyisovalerate) into 2-oxo-3-methylbutanoate (2-oxoisovalerate), the penultimate precursor to L-isoleucine and L-valine, respectively. The chain is Dihydroxy-acid dehydratase from Staphylococcus aureus (strain Mu50 / ATCC 700699).